Reading from the N-terminus, the 716-residue chain is Fatty acid oxidation complex subunit alpha (716 aa).

The segment at Met1–Ala189 is enoyl-CoA hydratase/isomerase. Residue Asp296 coordinates substrate. The segment at Lys311–Ala716 is 3-hydroxyacyl-CoA dehydrogenase. Residues Met324, Asp343, Val400 to Glu402, Lys407, and Ser429 each bind NAD(+). Catalysis depends on His450, which acts as the For 3-hydroxyacyl-CoA dehydrogenase activity. Asn453 serves as a coordination point for NAD(+). Positions 500 and 660 each coordinate substrate.

This sequence in the N-terminal section; belongs to the enoyl-CoA hydratase/isomerase family. In the C-terminal section; belongs to the 3-hydroxyacyl-CoA dehydrogenase family. In terms of assembly, heterotetramer of two alpha chains (FadB) and two beta chains (FadA).

The enzyme catalyses a (3S)-3-hydroxyacyl-CoA + NAD(+) = a 3-oxoacyl-CoA + NADH + H(+). It carries out the reaction a (3S)-3-hydroxyacyl-CoA = a (2E)-enoyl-CoA + H2O. It catalyses the reaction a 4-saturated-(3S)-3-hydroxyacyl-CoA = a (3E)-enoyl-CoA + H2O. The catalysed reaction is (3S)-3-hydroxybutanoyl-CoA = (3R)-3-hydroxybutanoyl-CoA. The enzyme catalyses a (3Z)-enoyl-CoA = a 4-saturated (2E)-enoyl-CoA. It carries out the reaction a (3E)-enoyl-CoA = a 4-saturated (2E)-enoyl-CoA. It functions in the pathway lipid metabolism; fatty acid beta-oxidation. Functionally, involved in the aerobic and anaerobic degradation of long-chain fatty acids via beta-oxidation cycle. Catalyzes the formation of 3-oxoacyl-CoA from enoyl-CoA via L-3-hydroxyacyl-CoA. It can also use D-3-hydroxyacyl-CoA and cis-3-enoyl-CoA as substrate. The chain is Fatty acid oxidation complex subunit alpha from Shewanella sp. (strain ANA-3).